The primary structure comprises 795 residues: Lon protease (795 aa).

A Lon N-terminal domain is found at 7-213 (SQILVVRGQV…KIIQAGIEDL (207 aa)). 379–386 (GPPGVGKS) contacts ATP. The 181-residue stretch at 615-795 (VSLPGIVNGM…YSDIYNKLFS (181 aa)) folds into the Lon proteolytic domain. Residues Ser702 and Lys745 contribute to the active site.

It belongs to the peptidase S16 family. As to quaternary structure, homohexamer. Organized in a ring with a central cavity.

It localises to the cytoplasm. The catalysed reaction is Hydrolysis of proteins in presence of ATP.. Its function is as follows. ATP-dependent serine protease that mediates the selective degradation of mutant and abnormal proteins as well as certain short-lived regulatory proteins. Required for cellular homeostasis and for survival from DNA damage and developmental changes induced by stress. Degrades polypeptides processively to yield small peptide fragments that are 5 to 10 amino acids long. Binds to DNA in a double-stranded, site-specific manner. The polypeptide is Lon protease (Mycoplasma genitalium (strain ATCC 33530 / DSM 19775 / NCTC 10195 / G37) (Mycoplasmoides genitalium)).